The following is a 149-amino-acid chain: Calmodulin (149 aa).

4 EF-hand domains span residues Glu8 to Asn43, Pro44 to Asp79, Asp81 to Lys116, and Leu117 to Lys149. Positions 21, 23, 25, 27, 32, 57, 59, 61, 63, 68, 94, 96, 98, and 105 each coordinate Ca(2+). An N6,N6,N6-trimethyllysine modification is found at Lys116. Residues Asp130, Asp132, Asp134, Gln136, and Glu141 each contribute to the Ca(2+) site.

Belongs to the calmodulin family.

In terms of biological role, calmodulin mediates the control of a large number of enzymes, ion channels and other proteins by Ca(2+). Among the enzymes to be stimulated by the calmodulin-Ca(2+) complex are a number of protein kinases and phosphatases. The chain is Calmodulin from Trypanosoma brucei brucei.